Reading from the N-terminus, the 474-residue chain is Cytochrome c biogenesis protein CcsB (474 aa).

3 helical membrane-spanning segments follow: residues 36 to 56 (LKLA…GTVI), 96 to 116 (SWWF…CTFR), and 182 to 202 (VGPI…MIGA).

It belongs to the Ccs1/CcsB family. May interact with CcsA.

The protein resides in the cell inner membrane. Functionally, required during biogenesis of c-type cytochromes (cytochrome c6 and cytochrome f) at the step of heme attachment. This is Cytochrome c biogenesis protein CcsB from Gloeobacter violaceus (strain ATCC 29082 / PCC 7421).